Here is an 808-residue protein sequence, read N- to C-terminus: MPVADCESGLSPADVTGAGAANGNPGHWRSYYRHVLLLAYQSCGVVYGDLSTSPLYVYKSTFIIGSLRRFQDEEIVFGVFSLVFWTLTLIPLLKYVFIVLAADDNGEGGTFALYSLLVRHAKFSLMPNQEAADEELTSYYRPGYAPQETPILTALRRFLENHRKSRTFLLVTVLFGASLVIGDGVLTPPMSVLSSFSGLQVHSTALTSGEVEILSCTVLVCLFMVQHWGTHRVAFLFAPVVIVWLLLLGALGVYNIVVWNPRVLRALSPYYLVRFFQHTGKDGWISLGGILLSMTGTEAMYADLGHFTAASIRVAFVGLIYPCLVLQYMGQAAFLSKSPHCDIHFVFFESIPTGIFWPVLVIATLAAIVGSQAVISATFSIVRQCTALGCFPRVKIVHTSRRIHGQIYSPEINWILMLLCIAVTMGLRDTTLIGNAYGMACAGVMLVTTLLMALVIVFVWQYSCLVAALFLVAFGVVEAVYLSAALMKVPQGGWLPLVLSLVFVAVMYVWHYGTRRKHQFDVQNKVSLRWIHALGPSLGIVRVPGIGIIYSELATGVPAIFSHFVTNLPAFHQVLVFICVKAVPVPHVRDEERHLVGRIGPREFRMYRCVVRHGYKDVLAEDTDFENDLVLRIAEFVQMEADFDQRCSISDDGVVASVEVEGRMAVVPRPSDLARTGLLMREPGEEESVVARAAAAAKPESLIHSMHTMHEAESPGFASRRRVRFEVANQHTDPRVKEELSALVEAKHAGVAYIMGHSYIKARKSSSVFKKFAVNVAYAFLRKNCRGPGLVLNIPHISLIEVGMIYYV.

Residues 1-34 (MPVADCESGLSPADVTGAGAANGNPGHWRSYYRH) lie on the Cytoplasmic side of the membrane. Residues 35-55 (VLLLAYQSCGVVYGDLSTSPL) form a helical membrane-spanning segment. Residues 56–81 (YVYKSTFIIGSLRRFQDEEIVFGVFS) lie on the Extracellular side of the membrane. A helical transmembrane segment spans residues 82-102 (LVFWTLTLIPLLKYVFIVLAA). Over 103–167 (DDNGEGGTFA…FLENHRKSRT (65 aa)) the chain is Cytoplasmic. Residues 168-188 (FLLVTVLFGASLVIGDGVLTP) form a helical membrane-spanning segment. Over 189 to 204 (PMSVLSSFSGLQVHST) the chain is Extracellular. The chain crosses the membrane as a helical span at residues 205-225 (ALTSGEVEILSCTVLVCLFMV). The Cytoplasmic portion of the chain corresponds to 226 to 232 (QHWGTHR). The chain crosses the membrane as a helical span at residues 233 to 253 (VAFLFAPVVIVWLLLLGALGV). The Extracellular segment spans residues 254–283 (YNIVVWNPRVLRALSPYYLVRFFQHTGKDG). Residues 284 to 304 (WISLGGILLSMTGTEAMYADL) traverse the membrane as a helical segment. Over 305–313 (GHFTAASIR) the chain is Cytoplasmic. A helical transmembrane segment spans residues 314 to 334 (VAFVGLIYPCLVLQYMGQAAF). The Extracellular segment spans residues 335–354 (LSKSPHCDIHFVFFESIPTG). Residues 355–375 (IFWPVLVIATLAAIVGSQAVI) traverse the membrane as a helical segment. Over 376 to 406 (SATFSIVRQCTALGCFPRVKIVHTSRRIHGQ) the chain is Cytoplasmic. A helical membrane pass occupies residues 407–427 (IYSPEINWILMLLCIAVTMGL). The Extracellular segment spans residues 428 to 439 (RDTTLIGNAYGM). Residues 440–460 (ACAGVMLVTTLLMALVIVFVW) form a helical membrane-spanning segment. Topologically, residues 461–464 (QYSC) are cytoplasmic. Residues 465-485 (LVAALFLVAFGVVEAVYLSAA) traverse the membrane as a helical segment. At 486–491 (LMKVPQ) the chain is on the extracellular side. The chain crosses the membrane as a helical span at residues 492 to 512 (GGWLPLVLSLVFVAVMYVWHY). At 513 to 808 (GTRRKHQFDV…LIEVGMIYYV (296 aa)) the chain is on the cytoplasmic side.

This sequence belongs to the HAK/KUP transporter (TC 2.A.72.3) family.

Its subcellular location is the membrane. Functionally, high-affinity potassium transporter. The protein is Probable potassium transporter 3 (HAK3) of Oryza sativa subsp. japonica (Rice).